Here is a 514-residue protein sequence, read N- to C-terminus: Na(+)/H(+) antiporter NhaB (514 aa).

12 consecutive transmembrane segments (helical) span residues 23–43 (LALL…PFIA), 63–83 (PLLP…TSAA), 97–117 (LLLM…LFIF), 120–140 (LLLS…AAAF), 144–164 (FLDA…FYGI), 202–222 (LMMH…VGEP), 238–258 (FFLR…LTCM), 303–323 (AVIG…VGLI), 357–377 (LTVF…APII), 391–411 (LFYL…VGTI), 447–467 (ATPN…APLI), and 475–495 (VWMA…CVEF).

The protein belongs to the NhaB Na(+)/H(+) (TC 2.A.34) antiporter family.

It is found in the cell inner membrane. It carries out the reaction 2 Na(+)(in) + 3 H(+)(out) = 2 Na(+)(out) + 3 H(+)(in). Na(+)/H(+) antiporter that extrudes sodium in exchange for external protons. The sequence is that of Na(+)/H(+) antiporter NhaB from Salmonella newport (strain SL254).